The sequence spans 198 residues: Ribosome maturation factor RimM (198 aa).

The 77-residue stretch at aspartate 92–glutamate 168 folds into the PRC barrel domain. A compositionally biased stretch (acidic residues) spans alanine 163–serine 172. Residues alanine 163–proline 198 are disordered.

The protein belongs to the RimM family. In terms of assembly, binds ribosomal protein uS19.

The protein localises to the cytoplasm. An accessory protein needed during the final step in the assembly of 30S ribosomal subunit, possibly for assembly of the head region. Essential for efficient processing of 16S rRNA. May be needed both before and after RbfA during the maturation of 16S rRNA. It has affinity for free ribosomal 30S subunits but not for 70S ribosomes. This is Ribosome maturation factor RimM from Bradyrhizobium sp. (strain BTAi1 / ATCC BAA-1182).